We begin with the raw amino-acid sequence, 490 residues long: Serine palmitoyltransferase 2 (490 aa).

The helical transmembrane segment at 10–30 (VDDVGYLPILFLYIAYAFIIF) threads the bilayer. N6-(pyridoxal phosphate)lysine is present on Lys321.

Belongs to the class-II pyridoxal-phosphate-dependent aminotransferase family. Forms a heterodimer with sptA. Pyridoxal 5'-phosphate is required as a cofactor.

It is found in the endoplasmic reticulum membrane. It carries out the reaction L-serine + hexadecanoyl-CoA + H(+) = 3-oxosphinganine + CO2 + CoA. It participates in lipid metabolism; sphingolipid metabolism. Catalytic subunit of serine palmitoyltransferase (SPT), which catalyzes the committed step in the synthesis of sphingolipids, the condensation of serine with palmitoyl CoA to form the long chain base 3-ketosphinganine. The sequence is that of Serine palmitoyltransferase 2 (sptB) from Dictyostelium discoideum (Social amoeba).